A 455-amino-acid polypeptide reads, in one-letter code: Homeobox protein 14 (455 aa).

Low complexity-rich tracts occupy residues 1–16 (MNHN…KNNS), 24–39 (SSRS…SSSG), 81–118 (TTTT…ESPN), 179–239 (ESPN…SPSF), and 263–294 (NNNN…TNNN). Disordered stretches follow at residues 1–53 (MNHN…SSIN), 67–121 (KQTK…NCNK), 178–239 (SESP…SPSF), and 258–296 (TLLS…NNGD). 2 DNA-binding regions (homeobox) span residues 310–369 (KSGQ…SKSG) and 372–431 (SYAK…NKLS). The interval 431 to 455 (SSKANQDNDNNNNNENNDDSYSDEG) is disordered. The span at 435–445 (NQDNDNNNNNE) shows a compositional bias: low complexity. Positions 446–455 (NNDDSYSDEG) are enriched in acidic residues.

It localises to the nucleus. Its function is as follows. Putative transcription factor. The chain is Homeobox protein 14 (hbx14) from Dictyostelium discoideum (Social amoeba).